A 191-amino-acid polypeptide reads, in one-letter code: Large ribosomal subunit protein bL12cz (191 aa).

Residues 1–58 (MASTTLSIATTIRSSSYPTLASINHFPSRTTTIEFPSRFGGGSSSTLTHRATHLRPIA) constitute a chloroplast transit peptide.

This sequence belongs to the bacterial ribosomal protein bL12 family.

The protein localises to the plastid. The protein resides in the chloroplast. The chain is Large ribosomal subunit protein bL12cz (RPL12A) from Arabidopsis thaliana (Mouse-ear cress).